Here is a 100-residue protein sequence, read N- to C-terminus: Large ribosomal subunit protein uL23 (100 aa).

It belongs to the universal ribosomal protein uL23 family. Part of the 50S ribosomal subunit. Contacts protein L29, and trigger factor when it is bound to the ribosome.

Its function is as follows. One of the early assembly proteins it binds 23S rRNA. One of the proteins that surrounds the polypeptide exit tunnel on the outside of the ribosome. Forms the main docking site for trigger factor binding to the ribosome. The protein is Large ribosomal subunit protein uL23 of Shewanella halifaxensis (strain HAW-EB4).